The following is a 798-amino-acid chain: Penicillin-binding protein 1A (798 aa).

Topologically, residues 1 to 9 (MIKKIITTC) are cytoplasmic. Residues 10-30 (MGLNNGLALFGVGLIAIAILV) form a helical; Signal-anchor for type II membrane protein membrane-spanning segment. At 31–798 (TYPKLPSLDS…NNRQQLDSLF (768 aa)) the chain is on the periplasmic side. The transglycosylase stretch occupies residues 50–218 (LTIYSSDGQV…SAYNPIVNPE (169 aa)). Glu88 functions as the Proton donor; for transglycosylase activity in the catalytic mechanism. Positions 413–699 (TVVQEPLLQG…GTIAVPVWVE (287 aa)) are transpeptidase. The active-site Acyl-ester intermediate; for transpeptidase activity is Ser460. Residues 734–798 (TSSDLALDNS…NNRQQLDSLF (65 aa)) are disordered. The span at 782 to 798 (LPSNTGNNNRQQLDSLF) shows a compositional bias: polar residues.

It in the N-terminal section; belongs to the glycosyltransferase 51 family. The protein in the C-terminal section; belongs to the transpeptidase family.

It is found in the cell inner membrane. It carries out the reaction [GlcNAc-(1-&gt;4)-Mur2Ac(oyl-L-Ala-gamma-D-Glu-L-Lys-D-Ala-D-Ala)](n)-di-trans,octa-cis-undecaprenyl diphosphate + beta-D-GlcNAc-(1-&gt;4)-Mur2Ac(oyl-L-Ala-gamma-D-Glu-L-Lys-D-Ala-D-Ala)-di-trans,octa-cis-undecaprenyl diphosphate = [GlcNAc-(1-&gt;4)-Mur2Ac(oyl-L-Ala-gamma-D-Glu-L-Lys-D-Ala-D-Ala)](n+1)-di-trans,octa-cis-undecaprenyl diphosphate + di-trans,octa-cis-undecaprenyl diphosphate + H(+). The catalysed reaction is Preferential cleavage: (Ac)2-L-Lys-D-Ala-|-D-Ala. Also transpeptidation of peptidyl-alanyl moieties that are N-acyl substituents of D-alanine.. It participates in cell wall biogenesis; peptidoglycan biosynthesis. Its function is as follows. Cell wall formation. Synthesis of cross-linked peptidoglycan from the lipid intermediates. The enzyme has a penicillin-insensitive transglycosylase N-terminal domain (formation of linear glycan strands) and a penicillin-sensitive transpeptidase C-terminal domain (cross-linking of the peptide subunits). This Neisseria flavescens protein is Penicillin-binding protein 1A (mrcA).